We begin with the raw amino-acid sequence, 317 residues long: MAASILPFEKPVAELIEKVRELRALAAADPRFEPELAQLEDNTGRLAREIFAGLTPMQKVLLSRHANRPYTLDYIKRLFTDWVELKGDRRFADDCSIVGGLATYHGRSVVVVGHQKGRGAKENVKRNFGMPHPEGYRKAIRLYEMADRFGLPILTFIDTMGAYPGIGAEERGQSEAIGAALAAMARVGVPIVATVIGEGGSGGALALGVANRVLVLEFSCYSVISPEGCAAILWKDGSRADEAAARLKITAPDLLQLGVVDTIVEEPTGGAHQDHDDAAARLDKALWATLTSMDGLGPEELVDDRYRRFRGLGSFVG.

In terms of domain architecture, CoA carboxyltransferase C-terminal spans 31-292; sequence RFEPELAQLE…DKALWATLTS (262 aa).

This sequence belongs to the AccA family. In terms of assembly, acetyl-CoA carboxylase is a heterohexamer composed of biotin carboxyl carrier protein (AccB), biotin carboxylase (AccC) and two subunits each of ACCase subunit alpha (AccA) and ACCase subunit beta (AccD).

The protein localises to the cytoplasm. The catalysed reaction is N(6)-carboxybiotinyl-L-lysyl-[protein] + acetyl-CoA = N(6)-biotinyl-L-lysyl-[protein] + malonyl-CoA. It functions in the pathway lipid metabolism; malonyl-CoA biosynthesis; malonyl-CoA from acetyl-CoA: step 1/1. Its function is as follows. Component of the acetyl coenzyme A carboxylase (ACC) complex. First, biotin carboxylase catalyzes the carboxylation of biotin on its carrier protein (BCCP) and then the CO(2) group is transferred by the carboxyltransferase to acetyl-CoA to form malonyl-CoA. The chain is Acetyl-coenzyme A carboxylase carboxyl transferase subunit alpha from Sorangium cellulosum (strain So ce56) (Polyangium cellulosum (strain So ce56)).